Here is a 108-residue protein sequence, read N- to C-terminus: Phosphoribosyl-ATP pyrophosphatase (108 aa).

This sequence belongs to the PRA-PH family.

It is found in the cytoplasm. The catalysed reaction is 1-(5-phospho-beta-D-ribosyl)-ATP + H2O = 1-(5-phospho-beta-D-ribosyl)-5'-AMP + diphosphate + H(+). It functions in the pathway amino-acid biosynthesis; L-histidine biosynthesis; L-histidine from 5-phospho-alpha-D-ribose 1-diphosphate: step 2/9. The protein is Phosphoribosyl-ATP pyrophosphatase of Chromobacterium violaceum (strain ATCC 12472 / DSM 30191 / JCM 1249 / CCUG 213 / NBRC 12614 / NCIMB 9131 / NCTC 9757 / MK).